A 406-amino-acid polypeptide reads, in one-letter code: Tyrosine--tRNA ligase (406 aa).

Tyr-35 serves as a coordination point for L-tyrosine. Residues 40–49 (PTADSLHIGH) carry the 'HIGH' region motif. Residues Tyr-168 and Gln-172 each coordinate L-tyrosine. The 'KMSKS' region signature appears at 228-232 (KMGKT). ATP is bound at residue Lys-231. The S4 RNA-binding domain maps to 340–406 (CSVVELLVDI…KKNYNRIIIK (67 aa)).

Belongs to the class-I aminoacyl-tRNA synthetase family. TyrS type 1 subfamily. Homodimer.

It localises to the cytoplasm. The enzyme catalyses tRNA(Tyr) + L-tyrosine + ATP = L-tyrosyl-tRNA(Tyr) + AMP + diphosphate + H(+). Functionally, catalyzes the attachment of tyrosine to tRNA(Tyr) in a two-step reaction: tyrosine is first activated by ATP to form Tyr-AMP and then transferred to the acceptor end of tRNA(Tyr). This Clostridium kluyveri (strain NBRC 12016) protein is Tyrosine--tRNA ligase.